The primary structure comprises 490 residues: GTPase Der (490 aa).

2 consecutive EngA-type G domains span residues 3-166 (PVVA…MEDL) and 203-376 (IKLA…DSST). Residues 9-16 (GRPNVGKS), 56-60 (DTGGI), 118-121 (NKID), 209-216 (GRPNVGKS), 256-260 (DTAGV), and 321-324 (NKWD) each bind GTP. The KH-like domain occupies 377 to 461 (RRVGTSMLTR…PIRIQFKEGE (85 aa)).

The protein belongs to the TRAFAC class TrmE-Era-EngA-EngB-Septin-like GTPase superfamily. EngA (Der) GTPase family. Associates with the 50S ribosomal subunit.

Functionally, GTPase that plays an essential role in the late steps of ribosome biogenesis. In Shigella boydii serotype 18 (strain CDC 3083-94 / BS512), this protein is GTPase Der.